The chain runs to 276 residues: Small ribosomal subunit protein uS2 (276 aa).

A disordered region spans residues 255–276 (ASATATAAPTEAGAPEPTTDPS).

The protein belongs to the universal ribosomal protein uS2 family.

In Mycolicibacterium paratuberculosis (strain ATCC BAA-968 / K-10) (Mycobacterium paratuberculosis), this protein is Small ribosomal subunit protein uS2.